The chain runs to 31 residues: Cytochrome b6-f complex subunit 8 (31 aa).

A helical membrane pass occupies residues 5–25; the sequence is IVSLAWAALMVVFTFSLSLVV.

Belongs to the PetN family. As to quaternary structure, the 4 large subunits of the cytochrome b6-f complex are cytochrome b6, subunit IV (17 kDa polypeptide, PetD), cytochrome f and the Rieske protein, while the 4 small subunits are PetG, PetL, PetM and PetN. The complex functions as a dimer.

The protein resides in the plastid. It localises to the chloroplast thylakoid membrane. In terms of biological role, component of the cytochrome b6-f complex, which mediates electron transfer between photosystem II (PSII) and photosystem I (PSI), cyclic electron flow around PSI, and state transitions. This Cicer arietinum (Chickpea) protein is Cytochrome b6-f complex subunit 8.